Here is a 74-residue protein sequence, read N- to C-terminus: IGMIVECEKEGYLMEANGCKRSCTLRPGHYCANECSYVKGKNGYCYAWVACYCYNMPDSVKIWDSATNTCGRGK.

Residues 1-8 (IGMIVECE) form the signal peptide. The 63-residue stretch at 9–71 (KEGYLMEANG…IWDSATNTCG (63 aa)) folds into the LCN-type CS-alpha/beta domain. Disulfide bonds link cysteine 19-cysteine 70, cysteine 23-cysteine 45, cysteine 31-cysteine 51, and cysteine 35-cysteine 53. Arginine 72 is modified (arginine amide).

This sequence belongs to the long (4 C-C) scorpion toxin superfamily. Sodium channel inhibitor family. Beta subfamily. In terms of tissue distribution, expressed by the venom gland.

Its subcellular location is the secreted. Its function is as follows. Beta toxins bind voltage-independently at site-4 of sodium channels (Nav) and shift the voltage of activation toward more negative potentials thereby affecting sodium channel activation and promoting spontaneous and repetitive firing. This chain is Toxin Td6, found in Tityus discrepans (Venezuelan scorpion).